A 340-amino-acid chain; its full sequence is Extracellular matrix protein-binding protein emp (340 aa).

An N-terminal signal peptide occupies residues 1–26 (MKKKLLVLTMSTLFATQLINSNHANA).

The protein resides in the cell surface. In terms of biological role, adhesin that binds to the host cell extracellular matrix proteins fibronectin, fibrinogen, collagen, and vitronectin. The polypeptide is Extracellular matrix protein-binding protein emp (emp) (Staphylococcus aureus).